The primary structure comprises 503 residues: Alpha-1-syntrophin (503 aa).

2 PH domains span residues 6-263 and 287-399; these read RAPR…AQIG and DIKQ…DGCH. The interval 40 to 68 is disordered; it reads LTVSPADGEPGPEPEPAQLNGAAEPGAAP. The 84-residue stretch at 81–164 folds into the PDZ domain; it reads RVTVRKADAG…EVVLEVKYMK (84 aa). 5 positions are modified to phosphoserine: S95, S178, S183, S187, and S194. Residues 177-203 form a disordered region; that stretch reads TSVGWDSPPASPLQRQPSSPGPQPRNL. Residues 447–503 form the SU domain; that stretch reads PFEKLQMSSDDGTSLLFLDFGGAEGEIQLDLHSCPKTMVFIIHSFLSAKVTRLGLLA. The segment at 481–503 is calmodulin-binding; the sequence is PKTMVFIIHSFLSAKVTRLGLLA.

It belongs to the syntrophin family. Monomer and homodimer. Interacts with MAPK12, TGFA, GA and F-actin. Interacts with the other members of the syntrophin family: SNTB1 and SNTB2; with dystrophin protein DMD and related proteins DTNA and UTRN; SGCG and SGCA of the dystrophin glycoprotein complex; NOS1; GRB2; calmodulin and the sodium channel proteins SCN4A and SCN5A. Interacts with MYOC; regulates muscle hypertrophy. Interacts with DTNB. In terms of processing, phosphorylated by CaM-kinase II. Phosphorylation may inhibit the interaction with DMD. In terms of tissue distribution, high expression in skeletal muscle. Expressed at intermediate level in heart, kidney and brain, and at low level in intestine, liver, lung and testis.

The protein resides in the cell membrane. It localises to the sarcolemma. The protein localises to the cell junction. Its subcellular location is the cytoplasm. It is found in the cytoskeleton. Adapter protein that binds to and probably organizes the subcellular localization of a variety of membrane proteins. May link various receptors to the actin cytoskeleton and the extracellular matrix via the dystrophin glycoprotein complex. Plays an important role in synapse formation and in the organization of UTRN and acetylcholine receptors at the neuromuscular synapse. Binds to phosphatidylinositol 4,5-bisphosphate. The polypeptide is Alpha-1-syntrophin (Snta1) (Mus musculus (Mouse)).